Here is a 233-residue protein sequence, read N- to C-terminus: Ribose-5-phosphate isomerase A (233 aa).

Residues 28-31 (SGST), 83-86 (DGAD), and 96-99 (KGGG) each bind substrate. Catalysis depends on Glu-105, which acts as the Proton acceptor. Residue Lys-123 coordinates substrate.

Belongs to the ribose 5-phosphate isomerase family. As to quaternary structure, homodimer.

The enzyme catalyses aldehydo-D-ribose 5-phosphate = D-ribulose 5-phosphate. It functions in the pathway carbohydrate degradation; pentose phosphate pathway; D-ribose 5-phosphate from D-ribulose 5-phosphate (non-oxidative stage): step 1/1. Functionally, catalyzes the reversible conversion of ribose-5-phosphate to ribulose 5-phosphate. The protein is Ribose-5-phosphate isomerase A of Bartonella bacilliformis (strain ATCC 35685 / KC583 / Herrer 020/F12,63).